The primary structure comprises 635 residues: Threonine--tRNA ligase (635 aa).

The region spanning Met1–Thr61 is the TGS domain. The catalytic stretch occupies residues Asp242–Pro533. Residues Cys333, His384, and His510 each coordinate Zn(2+).

It belongs to the class-II aminoacyl-tRNA synthetase family. Homodimer. Requires Zn(2+) as cofactor.

The protein resides in the cytoplasm. It carries out the reaction tRNA(Thr) + L-threonine + ATP = L-threonyl-tRNA(Thr) + AMP + diphosphate + H(+). In terms of biological role, catalyzes the attachment of threonine to tRNA(Thr) in a two-step reaction: L-threonine is first activated by ATP to form Thr-AMP and then transferred to the acceptor end of tRNA(Thr). Also edits incorrectly charged L-seryl-tRNA(Thr). The chain is Threonine--tRNA ligase from Burkholderia ambifaria (strain ATCC BAA-244 / DSM 16087 / CCUG 44356 / LMG 19182 / AMMD) (Burkholderia cepacia (strain AMMD)).